The sequence spans 1275 residues: Serine/threonine-protein kinase ULK4 (1275 aa).

The Protein kinase domain occupies 4–280; sequence FILYEEIGRG…WTRLLQHSFW (277 aa). Disordered stretches follow at residues 299–350 and 364–392; these read SRNT…KSTL and RPTPRTSTAVEVSPGEDMTHCSPQKTSPL. Residues 336–348 are compositionally biased toward basic and acidic residues; it reads FRLENPTEFRPKS. Residues 364-373 are compositionally biased toward polar residues; sequence RPTPRTSTAV. HEAT repeat units lie at residues 842–880, 926–964, 1025–1063, 1151–1189, and 1213–1253; these read LKLCLPLMPVVLHLVTSQVFRPQVVTEEFLFSYGTILSH, STVVDYILPPLVSLVQSQNVEWRLFSLRLLSETTSLLVN, LVEESKLIPLIFEVTLEHQESILGNTMQSVIALLSNLVA, NRPLTDLISLLIPLLPNEDPEIFDVSSKCLSILVQLYGG, and PKEQ…LAPG.

It belongs to the protein kinase superfamily. Ser/Thr protein kinase family. APG1/unc-51/ULK1 subfamily. In terms of tissue distribution, expressed in the brain, mainly in postmitotic neurons, including GABAergic neurons, but not in astrocytes (at protein level).

The enzyme catalyses L-seryl-[protein] + ATP = O-phospho-L-seryl-[protein] + ADP + H(+). It carries out the reaction L-threonyl-[protein] + ATP = O-phospho-L-threonyl-[protein] + ADP + H(+). Its function is as follows. May be involved in the remodeling of cytoskeletal components, such as alpha-tubulin, and in this way regulates neurite branching and elongation, as well as cell motility. In Homo sapiens (Human), this protein is Serine/threonine-protein kinase ULK4 (ULK4).